The chain runs to 236 residues: UPF0257 lipoprotein YnfC (236 aa).

The first 16 residues, 1-16, serve as a signal peptide directing secretion; that stretch reads MKYKLLPCLLAILLTG. Cys17 carries the N-palmitoyl cysteine lipid modification. Residue Cys17 is the site of S-diacylglycerol cysteine attachment.

Belongs to the UPF0257 family.

It localises to the cell membrane. The sequence is that of UPF0257 lipoprotein YnfC from Escherichia coli O157:H7.